Reading from the N-terminus, the 158-residue chain is Cytochrome c-type biogenesis protein CcmE (158 aa).

The segment covering 1–11 (MTRPDSGSSPA) has biased composition (polar residues). The tract at residues 1–20 (MTRPDSGSSPAPLSEARRRK) is disordered. Topologically, residues 1–23 (MTRPDSGSSPAPLSEARRRKRNP) are cytoplasmic. Residues 24–44 (LPTVLGITALLGLAGFIAFGN) traverse the membrane as a helical; Signal-anchor for type II membrane protein segment. The Extracellular portion of the chain corresponds to 45-158 (LNKSLEYFVT…ELRDLLEQSE (114 aa)). 2 residues coordinate heme: histidine 137 and tyrosine 141.

It belongs to the CcmE/CycJ family.

It localises to the cell membrane. Heme chaperone required for the biogenesis of c-type cytochromes. Transiently binds heme delivered by CcmC and transfers the heme to apo-cytochromes in a process facilitated by CcmF and CcmH. This is Cytochrome c-type biogenesis protein CcmE from Deinococcus deserti (strain DSM 17065 / CIP 109153 / LMG 22923 / VCD115).